Here is a 183-residue protein sequence, read N- to C-terminus: Inner membrane-spanning protein YciB (183 aa).

The next 5 helical transmembrane spans lie at 19-39 (LYGV…QLIV), 53-73 (IMGI…DLNF), 76-96 (WKVT…QFVF), 121-141 (LGWA…SYYF), and 151-171 (TFGF…YLYP).

This sequence belongs to the YciB family.

Its subcellular location is the cell inner membrane. Its function is as follows. Plays a role in cell envelope biogenesis, maintenance of cell envelope integrity and membrane homeostasis. This Actinobacillus pleuropneumoniae serotype 5b (strain L20) protein is Inner membrane-spanning protein YciB.